The following is a 336-amino-acid chain: Fructose-1,6-bisphosphatase class 1 (336 aa).

Mg(2+)-binding residues include glutamate 90, aspartate 112, leucine 114, and aspartate 115. Residues aspartate 115 to serine 118, asparagine 211, and lysine 277 contribute to the substrate site. Residue glutamate 283 participates in Mg(2+) binding.

The protein belongs to the FBPase class 1 family. In terms of assembly, homotetramer. Mg(2+) serves as cofactor.

Its subcellular location is the cytoplasm. The catalysed reaction is beta-D-fructose 1,6-bisphosphate + H2O = beta-D-fructose 6-phosphate + phosphate. It functions in the pathway carbohydrate biosynthesis; gluconeogenesis. The polypeptide is Fructose-1,6-bisphosphatase class 1 (Pseudomonas savastanoi pv. phaseolicola (strain 1448A / Race 6) (Pseudomonas syringae pv. phaseolicola (strain 1448A / Race 6))).